A 137-amino-acid chain; its full sequence is Small ribosomal subunit protein uS12 (137 aa).

The tract at residues 1 to 57 (MPTINQLVRKPRKSKVEKSKSPALNVGYNSRKKVQTNVSSPQKRGVATRVGTMTPKK) is disordered. Residue aspartate 102 is modified to 3-methylthioaspartic acid.

The protein belongs to the universal ribosomal protein uS12 family. As to quaternary structure, part of the 30S ribosomal subunit. Contacts proteins S8 and S17. May interact with IF1 in the 30S initiation complex.

Functionally, with S4 and S5 plays an important role in translational accuracy. Interacts with and stabilizes bases of the 16S rRNA that are involved in tRNA selection in the A site and with the mRNA backbone. Located at the interface of the 30S and 50S subunits, it traverses the body of the 30S subunit contacting proteins on the other side and probably holding the rRNA structure together. The combined cluster of proteins S8, S12 and S17 appears to hold together the shoulder and platform of the 30S subunit. In Streptococcus suis (strain 98HAH33), this protein is Small ribosomal subunit protein uS12.